A 120-amino-acid polypeptide reads, in one-letter code: MASVKRVVVAVMIVNVLALIFVGVAGSTRDVGSGGDDSEGARGREQQQVQQHEQNEDRSLFERGRAAVTGHPVRTAVGLAAAVVAVVSLLRLLKRRRRRAIQEESKESATAEEEEVAEEE.

A signal peptide spans 1–25; it reads MASVKRVVVAVMIVNVLALIFVGVA. A disordered region spans residues 27 to 59; the sequence is STRDVGSGGDDSEGARGREQQQVQQHEQNEDRS. Residues 76–93 form a helical membrane-spanning segment; sequence AVGLAAAVVAVVSLLRLL. Over residues 100-109 the composition is skewed to basic and acidic residues; sequence AIQEESKESA. Positions 100-120 are disordered; that stretch reads AIQEESKESATAEEEEVAEEE. Positions 110–120 are enriched in acidic residues; sequence TAEEEEVAEEE.

The protein localises to the secreted. Its subcellular location is the parasitophorous vacuole lumen. It is found in the parasitophorous vacuole membrane. The protein resides in the cytoplasmic vesicle. It localises to the secretory vesicle. Functionally, plays a role in the function of the cyst and parasitophorous vacuole membranes and therefore in host-parasite interactions. This chain is Dense granule protein 5 (GRA5), found in Toxoplasma gondii.